The primary structure comprises 452 residues: MSTTAWQKCLGLLQDEFSAQQFNTWLRPLQAYMDEQRLILLAPNRFVVDWVRKHFFSRIEELIKQFSGDDIKAISIEVGSKPVEAVDTPAETIVTSSSTAPLKSAPKKAVDYKSSHLNKKFVFDSFVEGNSNQLARAASMQVAERPGDAYNPLFIYGGVGLGKTHLMHAIGNSILKNNPEAKVLYLHSERFVADMVKALQTNSINEFKRFYRSLNALLIDDIQFFAGKDRSQEEFFHTFNALLEGQQQIILTSDRYPKEIEGMEERLKSRFGWGLTVAVEPPELETRVAILISKAEQSNIELPYEVAFFIAKRIRSNVRELEGALRRVIANAHFTGKPITIEFVHEALRDLLALQDKLVTIENIQKTVAEYYKVKVADLLSKRRSRSIARPRQMAMALSKELTNHSLPEIGDHFGGKDHTTVIHACRKVKELIQDDSDFAEDYKNLMRILSS.

The tract at residues 1–85 is domain I, interacts with DnaA modulators; that stretch reads MSTTAWQKCL…IEVGSKPVEA (85 aa). Residues 85-115 form a domain II region; that stretch reads AVDTPAETIVTSSSTAPLKSAPKKAVDYKSS. The domain III, AAA+ region stretch occupies residues 116–332; sequence HLNKKFVFDS…GALRRVIANA (217 aa). Positions 160, 162, 163, and 164 each coordinate ATP. Positions 333 to 452 are domain IV, binds dsDNA; the sequence is HFTGKPITIE…YKNLMRILSS (120 aa).

Belongs to the DnaA family. As to quaternary structure, oligomerizes as a right-handed, spiral filament on DNA at oriC.

It localises to the cytoplasm. Plays an essential role in the initiation and regulation of chromosomal replication. ATP-DnaA binds to the origin of replication (oriC) to initiate formation of the DNA replication initiation complex once per cell cycle. Binds the DnaA box (a 9 base pair repeat at the origin) and separates the double-stranded (ds)DNA. Forms a right-handed helical filament on oriC DNA; dsDNA binds to the exterior of the filament while single-stranded (ss)DNA is stabiized in the filament's interior. The ATP-DnaA-oriC complex binds and stabilizes one strand of the AT-rich DNA unwinding element (DUE), permitting loading of DNA polymerase. After initiation quickly degrades to an ADP-DnaA complex that is not apt for DNA replication. Binds acidic phospholipids. In Legionella pneumophila (strain Paris), this protein is Chromosomal replication initiator protein DnaA.